Here is a 541-residue protein sequence, read N- to C-terminus: Calcium-dependent protein kinase 9 (541 aa).

The tract at residues 1–75 is disordered; it reads MGNCFAKNHG…PGLSPKTTTK (75 aa). G2 carries the N-myristoyl glycine lipid modification. The span at 14–54 shows a compositional bias: polar residues; sequence PQQNGNTTRSVEVGVTNQDPPSYTPQARTTQQPEKPGSVNS. The residue at position 69 (S69) is a Phosphoserine. A Protein kinase domain is found at 91–349; the sequence is YTLGKELGRG…AADVLQHPWL (259 aa). Residues 97–105 and K120 contribute to the ATP site; that span reads LGRGQFGVT. The Proton acceptor role is filled by D215. S255 carries the phosphoserine modification. The tract at residues 355–385 is autoinhibitory domain; that stretch reads ASDKPIDSAVLSRMKQFRAMNKLKKLALKVI. 4 consecutive EF-hand domains span residues 392 to 427, 428 to 463, 464 to 499, and 500 to 534; these read EEIQGLKAMFANIDTDNSGTITYEELKEGLAKLGSK, LTEAEVKQLMDAADVDGNGSIDYIEFITATMHRHRL, ESNENLYKAFQHFDKDSSGYITIDELESALKEYGMG, and DDATIKEVLSDVDSDNDGRINYEEFCAMMRSGNPQ. Positions 405, 407, 409, 411, 416, 441, 443, 445, 447, 452, 477, 479, 481, 483, 488, 512, 514, 516, 518, and 523 each coordinate Ca(2+).

The protein belongs to the protein kinase superfamily. Ser/Thr protein kinase family. CDPK subfamily.

It is found in the cell membrane. The catalysed reaction is L-seryl-[protein] + ATP = O-phospho-L-seryl-[protein] + ADP + H(+). The enzyme catalyses L-threonyl-[protein] + ATP = O-phospho-L-threonyl-[protein] + ADP + H(+). With respect to regulation, activated by calcium. Autophosphorylation may play an important role in the regulation of the kinase activity. Its function is as follows. May play a role in signal transduction pathways that involve calcium as a second messenger. This Arabidopsis thaliana (Mouse-ear cress) protein is Calcium-dependent protein kinase 9 (CPK9).